Reading from the N-terminus, the 478-residue chain is Sorting nexin-4 (478 aa).

Residues 1-10 (MAVIDQHQDD) show a composition bias toward basic and acidic residues. A disordered region spans residues 1–56 (MAVIDQHQDDFSNVSWNTDEHTAAESSSSVTATEFDDTERNGHNAYESDAPGSDGQ). A compositionally biased stretch (low complexity) spans 24–33 (AESSSSVTAT). The PX domain occupies 58-180 (VLDCVVSEPL…IFLESPDWNA (123 aa)). 4 residues coordinate a 1,2-diacyl-sn-glycero-3-phospho-(1D-myo-inositol-3-phosphate): Arg101, Thr103, Lys127, and Arg146. Residues 459-478 (EGVSGTRSTGVEPPGRRLAD) are disordered.

It belongs to the sorting nexin family. As to quaternary structure, interacts with the mitochondrial prohibitin complex subunits PHB1 and PHB2; the interaction is direct and plays a role in mitophagy.

It localises to the cytoplasm. The protein localises to the cytosol. Its subcellular location is the preautophagosomal structure membrane. It is found in the endosome membrane. The protein resides in the mitochondrion membrane. It localises to the lipid droplet. Sorting nexin, involved in the separation or division of vacuoles throughout the entire life cycle of the cells. Involved in retrieval of late-Golgi SNAREs from post-Golgi endosomes to the trans-Golgi network, for cytoplasm to vacuole transport (Cvt), and autophagy of large cargos including mitophagy, pexophagy and glycophagy. Required for the switch to necrotrophic growth. In Colletotrichum higginsianum (strain IMI 349063) (Crucifer anthracnose fungus), this protein is Sorting nexin-4.